The following is a 115-amino-acid chain: Biotrophy-associated secreted protein 1 (115 aa).

Positions 1–22 (MHVFNFAALFTVLATFTATAAA) are cleaved as a signal peptide. Residues 24–115 (DQGSNTFDQR…GIRRVENYYP (92 aa)) are disordered. Composition is skewed to basic and acidic residues over residues 46-55 (IREEKQENVG) and 91-115 (QQKERAERKQDRGLNGIRRVENYYP).

The protein resides in the secreted. Its subcellular location is the host cytoplasm. Its function is as follows. Secreted effector involved in biotrophic colonization of plant cells. Induces an early, basal defense response in susceptible rice, including rapid callose deposition and ROS production in leaves and calli. Also promotes sporulation and mycelia growth suggesting a role across the whole process of interaction, from the biotrophic phase to sporulation. This Pyricularia oryzae (strain 70-15 / ATCC MYA-4617 / FGSC 8958) (Rice blast fungus) protein is Biotrophy-associated secreted protein 1.